A 233-amino-acid chain; its full sequence is Attacin-B (233 aa).

The first 17 residues, 1–17, serve as a signal peptide directing secretion; that stretch reads MFAKLFLVSVLLVGVNS. The propeptide occupies 18 to 46; that stretch reads RYVLVEEPGYYDKQYEEQPQQWVNSRVRR.

The protein belongs to the attacin/sarcotoxin-2 family.

It is found in the secreted. Its function is as follows. Hemolymph antibacterial protein. This is Attacin-B from Hyalophora cecropia (Cecropia moth).